The chain runs to 313 residues: MAMNVLQSPSRPGLGKVSGFFWHNPGLGLFLLLLGPLMWFGIVYFGSLLTLLWQGFYTFDDFTMSVTPELTLANIRALFNPANYDIILRTLTMAVAVTIASAILAFPMAWYMARYTSGKMKAFFYIAVMLPMWASYIVKAYAWTLLLAKDGVAQWFLQHLGLEPLLTAFLTLPAVGGNTLSTSGLGRFLVFLYIWLPFMILPVQAALERLPPSLLQASADLGARPRQTFRYVVLPLAIPGIAAGSIFTFSLTLGDFIVPQLVGPPGYFIGNMVYSQQGAIGNMPMAAAFTLVPIILIALYLAFVKRLGAFDAL.

The Cytoplasmic segment spans residues 1–25 (MAMNVLQSPSRPGLGKVSGFFWHNP). A helical membrane pass occupies residues 26–46 (GLGLFLLLLGPLMWFGIVYFG). Topologically, residues 47 to 92 (SLLTLLWQGFYTFDDFTMSVTPELTLANIRALFNPANYDIILRTLT) are periplasmic. The region spanning 87–302 (ILRTLTMAVA…PIILIALYLA (216 aa)) is the ABC transmembrane type-1 domain. Residues 93 to 113 (MAVAVTIASAILAFPMAWYMA) form a helical membrane-spanning segment. The Cytoplasmic segment spans residues 114–122 (RYTSGKMKA). A helical membrane pass occupies residues 123–143 (FFYIAVMLPMWASYIVKAYAW). Residues 144–154 (TLLLAKDGVAQ) lie on the Periplasmic side of the membrane. The chain crosses the membrane as a helical span at residues 155–175 (WFLQHLGLEPLLTAFLTLPAV). The Cytoplasmic portion of the chain corresponds to 176–187 (GGNTLSTSGLGR). The chain crosses the membrane as a helical span at residues 188 to 208 (FLVFLYIWLPFMILPVQAALE). Residues 209–230 (RLPPSLLQASADLGARPRQTFR) lie on the Periplasmic side of the membrane. The helical transmembrane segment at 231-251 (YVVLPLAIPGIAAGSIFTFSL) threads the bilayer. Position 252 (T252) is a topological domain, cytoplasmic. A helical transmembrane segment spans residues 253–273 (LGDFIVPQLVGPPGYFIGNMV). At 274-283 (YSQQGAIGNM) the chain is on the periplasmic side. The helical transmembrane segment at 284–304 (PMAAAFTLVPIILIALYLAFV) threads the bilayer. The Cytoplasmic segment spans residues 305-313 (KRLGAFDAL).

The protein belongs to the binding-protein-dependent transport system permease family. CysTW subfamily.

Its subcellular location is the cell inner membrane. Probably part of the ABC transporter complex YdcSTUV. Probably responsible for the translocation of the substrate across the membrane. This Escherichia coli (strain K12) protein is Inner membrane ABC transporter permease protein YdcU (ydcU).